The primary structure comprises 303 residues: MIKQRTLKNIIRATGVGLHSGEKVYLTLKPAPVDTGIVFCRTDLDPVVEIPARAENVGETTMSTTLVKGDVKVDTVEHLLSAMAGLGIDNAYVELSASEVPIMDGSAGPFVFLIQSAGLQEQEAAKKFIRIKREVSVEEGDKRAVFVPFDGFKVSFEIDFDHPVFRGRTQQASVDFSSTSFVKEVSRARTFGFMRDIEYLRSQNLALGGSVENAIVVDENRVLNEDGLRYEDEFVKHKILDAIGDLYLLGNSLIGEFRGFKSGHALNNQLLRTLIADKDAWEVVTFEDARTAPISYMRPAAAV.

Zn(2+)-binding residues include His-78, His-237, and Asp-241. His-264 (proton donor) is an active-site residue.

This sequence belongs to the LpxC family. The cofactor is Zn(2+).

It catalyses the reaction a UDP-3-O-[(3R)-3-hydroxyacyl]-N-acetyl-alpha-D-glucosamine + H2O = a UDP-3-O-[(3R)-3-hydroxyacyl]-alpha-D-glucosamine + acetate. It functions in the pathway glycolipid biosynthesis; lipid IV(A) biosynthesis; lipid IV(A) from (3R)-3-hydroxytetradecanoyl-[acyl-carrier-protein] and UDP-N-acetyl-alpha-D-glucosamine: step 2/6. Catalyzes the hydrolysis of UDP-3-O-myristoyl-N-acetylglucosamine to form UDP-3-O-myristoylglucosamine and acetate, the committed step in lipid A biosynthesis. This Pseudomonas aeruginosa (strain LESB58) protein is UDP-3-O-acyl-N-acetylglucosamine deacetylase.